We begin with the raw amino-acid sequence, 686 residues long: Epsin (686 aa).

An ENTH domain is found at 14–145 (DAVLNTPEIE…QDDQRIKEER (132 aa)). Disordered stretches follow at residues 177 to 417 (YDSD…FNNN) and 463 to 571 (NSSM…TMRP). The segment covering 185 to 211 (NQRDSYGGNQRDSYGGNQRDSYGGNQR) has biased composition (polar residues). Over residues 212–225 (ETTRRDSFNGRDEG) the composition is skewed to basic and acidic residues. Polar residues predominate over residues 237–256 (SYDSDPYSNTRAEYENYSNR). Low complexity-rich tracts occupy residues 269–340 (SNNS…SGPS) and 383–417 (NNTN…FNNN). Polar residues predominate over residues 491–503 (FDQQSGDFSNKND). Residues 504-521 (GQQKPKDTNDPWSKKDLF) are compositionally biased toward basic and acidic residues. Residues 527–547 (GNQNPNQSPVNNTNNNNNGNT) show a composition bias toward low complexity. Over residues 558–567 (PITSAGSTIP) the composition is skewed to polar residues.

The protein belongs to the epsin family.

The protein resides in the membrane. It is found in the clathrin-coated pit. Its function is as follows. Binds to membranes enriched in phosphatidylinositol 4,5-bisphosphate (PtdIns(4,5)P2). This is Epsin (epnA) from Dictyostelium discoideum (Social amoeba).